Here is a 130-residue protein sequence, read N- to C-terminus: Small ribosomal subunit protein uS9 (130 aa).

It belongs to the universal ribosomal protein uS9 family.

The sequence is that of Small ribosomal subunit protein uS9 from Bordetella bronchiseptica (strain ATCC BAA-588 / NCTC 13252 / RB50) (Alcaligenes bronchisepticus).